Here is a 205-residue protein sequence, read N- to C-terminus: Ribonuclease HII (205 aa).

One can recognise an RNase H type-2 domain in the interval 14 to 205; it reads SLISGIDEAG…SFRLKQLGEK (192 aa). A divalent metal cation contacts are provided by D20, E21, and D117.

Belongs to the RNase HII family. Mn(2+) serves as cofactor. The cofactor is Mg(2+).

The protein resides in the cytoplasm. The enzyme catalyses Endonucleolytic cleavage to 5'-phosphomonoester.. Functionally, endonuclease that specifically degrades the RNA of RNA-DNA hybrids. In Chlorobium phaeobacteroides (strain DSM 266 / SMG 266 / 2430), this protein is Ribonuclease HII.